Consider the following 69-residue polypeptide: Sec-independent protein translocase protein TatA (69 aa).

Residues 1 to 21 traverse the membrane as a helical segment; the sequence is MFGKLGMPELVLIFAVALVIF.

Belongs to the TatA/E family. In terms of assembly, forms a complex with TatC.

The protein localises to the cell membrane. Part of the twin-arginine translocation (Tat) system that transports large folded proteins containing a characteristic twin-arginine motif in their signal peptide across membranes. TatA could form the protein-conducting channel of the Tat system. This Alkaliphilus metalliredigens (strain QYMF) protein is Sec-independent protein translocase protein TatA.